The sequence spans 142 residues: uncharacterized protein (142 aa).

This is an uncharacterized protein from Homo sapiens (Human).